Reading from the N-terminus, the 301-residue chain is Mycothiol acetyltransferase (301 aa).

N-acetyltransferase domains are found at residues 6-151 (EWRQ…ILRD) and 153-301 (VSLR…QYGR). 79–81 (LFV) is an acetyl-CoA binding site. Residues E180, K219, and E235 each contribute to the 1D-myo-inositol 2-(L-cysteinylamino)-2-deoxy-alpha-D-glucopyranoside site. Acetyl-CoA-binding positions include 239–241 (VGV) and 246–252 (QGGGLGR). A 1D-myo-inositol 2-(L-cysteinylamino)-2-deoxy-alpha-D-glucopyranoside-binding site is contributed by Y273.

The protein belongs to the acetyltransferase family. MshD subfamily. Monomer.

It catalyses the reaction 1D-myo-inositol 2-(L-cysteinylamino)-2-deoxy-alpha-D-glucopyranoside + acetyl-CoA = mycothiol + CoA + H(+). Its function is as follows. Catalyzes the transfer of acetyl from acetyl-CoA to desacetylmycothiol (Cys-GlcN-Ins) to form mycothiol. In Amycolatopsis mediterranei (strain U-32), this protein is Mycothiol acetyltransferase.